Reading from the N-terminus, the 89-residue chain is Small ribosomal subunit protein uS15 (89 aa).

Belongs to the universal ribosomal protein uS15 family. As to quaternary structure, part of the 30S ribosomal subunit. Forms a bridge to the 50S subunit in the 70S ribosome, contacting the 23S rRNA.

One of the primary rRNA binding proteins, it binds directly to 16S rRNA where it helps nucleate assembly of the platform of the 30S subunit by binding and bridging several RNA helices of the 16S rRNA. Functionally, forms an intersubunit bridge (bridge B4) with the 23S rRNA of the 50S subunit in the ribosome. The chain is Small ribosomal subunit protein uS15 from Chlorobium limicola (strain DSM 245 / NBRC 103803 / 6330).